The primary structure comprises 239 residues: MSLMKEMLSAGVHFGHKKAFWNPQMKEYIFGINHGVHIINLEKTVPLFQDAVNFVGKTVANGGKVLFVGTKRQAQDIIEAEAKRCGMPFVSHRWLGGMLTNYKTVRQSIKRLAQLEKMKEDGTFESLTKKEMLQNIRTIEKLEKVLGGIKEMGGLPDAIVVIDSNKEHIAIQEAQKLGIKVVSIVDTNSNPEGIDYIIPGNDDAVKSISFYMKKFADAVIDAQGLDRAVEAKAEETTEA.

This sequence belongs to the universal ribosomal protein uS2 family.

The protein is Small ribosomal subunit protein uS2 of Francisella philomiragia subsp. philomiragia (strain ATCC 25017 / CCUG 19701 / FSC 153 / O#319-036).